The following is a 429-amino-acid chain: Histidine--tRNA ligase (429 aa).

Belongs to the class-II aminoacyl-tRNA synthetase family. As to quaternary structure, homodimer.

It is found in the cytoplasm. The catalysed reaction is tRNA(His) + L-histidine + ATP = L-histidyl-tRNA(His) + AMP + diphosphate + H(+). The protein is Histidine--tRNA ligase of Dechloromonas aromatica (strain RCB).